A 109-amino-acid chain; its full sequence is Thioredoxin 1 (109 aa).

Positions 2–109 constitute a Thioredoxin domain; sequence SDKIIHLTDD…LKEFLDANLA (108 aa). Residues C33 and C36 each act as nucleophile in the active site. Cysteines 33 and 36 form a disulfide. K70 is subject to N6-acetyllysine.

This sequence belongs to the thioredoxin family. Monomer.

Functionally, participates in various redox reactions through the reversible oxidation of its active center dithiol to a disulfide and catalyzes dithiol-disulfide exchange reactions. This chain is Thioredoxin 1 (trxA), found in Escherichia coli O157:H7.